We begin with the raw amino-acid sequence, 247 residues long: PABIR family member 2 (247 aa).

Residues 1 to 23 (MAQEKMELDLEPDTSYGGTLRRS) form a disordered region. A2 carries the post-translational modification N-acetylalanine. S25, S33, S50, S58, and L63 each carry phosphoserine. The tract at residues 82–104 (ISQSWDESLSLSDSDFDKPEKLY) is disordered. The segment covering 83-94 (SQSWDESLSLSD) has biased composition (low complexity). T112 is subject to Phosphothreonine. A phosphoserine mark is found at S115 and S119. Residue R122 is modified to Omega-N-methylarginine. Disordered stretches follow at residues 129–152 (VSSS…SQSP), 158–177 (PSVL…SQPK), and 202–230 (DILD…SPVA). Residues S137 and S141 each carry the phosphoserine modification. The segment covering 166–176 (RKGEMETESQP) has biased composition (basic and acidic residues). The segment covering 202 to 216 (DILDGSSSSSGLSSD) has biased composition (low complexity).

Belongs to the FAM122 family. Post-translationally, isoform 3 and isoform 4 are phosphorylated on Ser-62 and Ser-64.

This Homo sapiens (Human) protein is PABIR family member 2.